Here is a 629-residue protein sequence, read N- to C-terminus: tRNA uridine 5-carboxymethylaminomethyl modification enzyme MnmG (629 aa).

Residues 13 to 18 (GGGHAG), Val125, and Ser180 each bind FAD. 273 to 287 (GPRYCPSIEDKVMRF) contacts NAD(+). FAD is bound at residue Gln370.

This sequence belongs to the MnmG family. As to quaternary structure, homodimer. Heterotetramer of two MnmE and two MnmG subunits. FAD is required as a cofactor.

Its subcellular location is the cytoplasm. Its function is as follows. NAD-binding protein involved in the addition of a carboxymethylaminomethyl (cmnm) group at the wobble position (U34) of certain tRNAs, forming tRNA-cmnm(5)s(2)U34. This chain is tRNA uridine 5-carboxymethylaminomethyl modification enzyme MnmG, found in Serratia proteamaculans (strain 568).